The following is an 874-amino-acid chain: Alanine--tRNA ligase (874 aa).

Residues histidine 562, histidine 566, cysteine 664, and histidine 668 each contribute to the Zn(2+) site.

The protein belongs to the class-II aminoacyl-tRNA synthetase family. Zn(2+) serves as cofactor.

It localises to the cytoplasm. It catalyses the reaction tRNA(Ala) + L-alanine + ATP = L-alanyl-tRNA(Ala) + AMP + diphosphate. In terms of biological role, catalyzes the attachment of alanine to tRNA(Ala) in a two-step reaction: alanine is first activated by ATP to form Ala-AMP and then transferred to the acceptor end of tRNA(Ala). Also edits incorrectly charged Ser-tRNA(Ala) and Gly-tRNA(Ala) via its editing domain. The polypeptide is Alanine--tRNA ligase (Shewanella baltica (strain OS155 / ATCC BAA-1091)).